A 146-amino-acid polypeptide reads, in one-letter code: Putative pre-16S rRNA nuclease (146 aa).

This sequence belongs to the YqgF nuclease family.

Its subcellular location is the cytoplasm. Its function is as follows. Could be a nuclease involved in processing of the 5'-end of pre-16S rRNA. This chain is Putative pre-16S rRNA nuclease, found in Mycoplasmopsis pulmonis (strain UAB CTIP) (Mycoplasma pulmonis).